A 353-amino-acid chain; its full sequence is Diacetylchitobiose uptake system permease protein NgcF (353 aa).

The interval 1-24 (MKDTIPTAETASRRPEPAARGGRP) is disordered. 6 consecutive transmembrane segments (helical) span residues 36-56 (FFLAFLGVPLAIFVIFVLIPF), 100-120 (LLAAFVPLVTLTLALGVAVAI), 141-161 (IISFFPYVVPAIIVGLIWAQM), 197-217 (VMFVIVWGLVGFYAVLFIAAI), 254-274 (AYIYLGIAALDAFVYVQAMVP), and 303-323 (TAMGVVLAAVTLVFAALVFLV). Residues 95–320 (LRNVALLAAF…AVTLVFAALV (226 aa)) enclose the ABC transmembrane type-1 domain. The disordered stretch occupies residues 329–353 (GGEGESKRKAPGSRARRAAAKGGAR). Residues 337–353 (KAPGSRARRAAAKGGAR) are compositionally biased toward basic residues.

The protein belongs to the binding-protein-dependent transport system permease family. In terms of assembly, the complex is composed of two ATP-binding proteins (MsiK), two transmembrane proteins (NgcF and NgcG) and a solute-binding protein (NgcE).

Its subcellular location is the cell membrane. Part of the ABC transporter complex NgcEFG-MsiK involved in N,N'-diacetylchitobiose ((GlcNAc)2) uptake. Responsible for the translocation of the substrate across the membrane. In Streptomyces coelicolor (strain ATCC BAA-471 / A3(2) / M145), this protein is Diacetylchitobiose uptake system permease protein NgcF.